Consider the following 410-residue polypeptide: Serine hydroxymethyltransferase (410 aa).

(6S)-5,6,7,8-tetrahydrofolate is bound by residues Leu119 and 123 to 125 (GHL). Lys228 bears the N6-(pyridoxal phosphate)lysine mark. 351–353 (SPF) contributes to the (6S)-5,6,7,8-tetrahydrofolate binding site.

Belongs to the SHMT family. Homodimer. Pyridoxal 5'-phosphate is required as a cofactor.

The protein localises to the cytoplasm. It carries out the reaction (6R)-5,10-methylene-5,6,7,8-tetrahydrofolate + glycine + H2O = (6S)-5,6,7,8-tetrahydrofolate + L-serine. The protein operates within one-carbon metabolism; tetrahydrofolate interconversion. It participates in amino-acid biosynthesis; glycine biosynthesis; glycine from L-serine: step 1/1. Functionally, catalyzes the reversible interconversion of serine and glycine with tetrahydrofolate (THF) serving as the one-carbon carrier. This reaction serves as the major source of one-carbon groups required for the biosynthesis of purines, thymidylate, methionine, and other important biomolecules. Also exhibits THF-independent aldolase activity toward beta-hydroxyamino acids, producing glycine and aldehydes, via a retro-aldol mechanism. The protein is Serine hydroxymethyltransferase of Clostridium perfringens (strain ATCC 13124 / DSM 756 / JCM 1290 / NCIMB 6125 / NCTC 8237 / Type A).